We begin with the raw amino-acid sequence, 281 residues long: MTAQLIDGNALSRQLRTEVAQRAALLRARGITPGLAVVLVGDNPASQVYVRNKVKACEDNGLHSVLERYPAEMSEADLLARVEALNNDPAIHGILVQLPLPAHIDAQKVIEAISPAKDVDGFHVGSAGALMVGQPGFWPCTPYGCMKMLESIGYDLRGKHAVVIGRSNIVGKPMALMLLQKNATVTICHSATADLKAMTLQADVIVAAVGKRNVLRADMVKPGAVVIDVGMNRNEEGKLCGDVDFDGVKEVAGYITPVPGGVGPMTITMLLVNTLEAAERG.

NADP(+)-binding positions include 165–167 and serine 190; that span reads GRS.

The protein belongs to the tetrahydrofolate dehydrogenase/cyclohydrolase family. Homodimer.

It carries out the reaction (6R)-5,10-methylene-5,6,7,8-tetrahydrofolate + NADP(+) = (6R)-5,10-methenyltetrahydrofolate + NADPH. The catalysed reaction is (6R)-5,10-methenyltetrahydrofolate + H2O = (6R)-10-formyltetrahydrofolate + H(+). The protein operates within one-carbon metabolism; tetrahydrofolate interconversion. Catalyzes the oxidation of 5,10-methylenetetrahydrofolate to 5,10-methenyltetrahydrofolate and then the hydrolysis of 5,10-methenyltetrahydrofolate to 10-formyltetrahydrofolate. This Polaromonas naphthalenivorans (strain CJ2) protein is Bifunctional protein FolD.